The primary structure comprises 162 residues: Anaerobic nitrite reductase (162 aa).

N-acetylserine is present on Ser-2. The region spanning 9–158 is the Globin domain; that stretch reads VFTEEQEALV…LVAAIKFEMK (150 aa). The short motif at 42 to 46 is the Homodimerization element; it reads EIAPS. Residues Ser-52, Lys-66, His-70, Arg-100, and His-105 each contribute to the heme b site. The Homodimerization motif lies at 112–124; sequence NEHFEVTRFALLE.

This sequence belongs to the plant globin family. As to quaternary structure, homodimer with distinct heme coordination in each subunits. It depends on heme b as a cofactor. As to expression, root nodules.

It is found in the cytoplasm. The protein resides in the nucleus. The catalysed reaction is Fe(III)-heme b-[protein] + nitric oxide + H2O = Fe(II)-heme b-[protein] + nitrite + 2 H(+). Functionally, phytoglobin that reduces nitrite to nitric oxide (NO) under anoxic conditions (e.g. during flooding or in waterlogged soil) and upon root nodulation. Required for general plant development and during nodulation, especially for the onset of symbiosis. Monitors nitric oxide (NO) levels during early phase of the nitrogen-fixing symbiosis and buffers oxygen in functioning nodules. May not function as an oxygen storage or transport protein. Has an unusually high affinity for O(2) through a hexacoordinate heme iron because of a very low dissociation constant. In Parasponia andersonii (Sponia andersonii), this protein is Anaerobic nitrite reductase.